The chain runs to 332 residues: Nuclear hormone receptor family member nhr-9 (332 aa).

The nuclear receptor DNA-binding region spans 11 to 85; it reads ERRCAICSKL…MGMRIVTNQY (75 aa). 2 NR C4-type zinc fingers span residues 14-34 and 50-73; these read CAIC…CNAC and CINN…YNKC. The NR LBD domain maps to 101–332; it reads DRSNKLMNFQ…KRLCAELLGA (232 aa).

Belongs to the nuclear hormone receptor family.

It localises to the nucleus. Its function is as follows. Orphan nuclear receptor. This Caenorhabditis elegans protein is Nuclear hormone receptor family member nhr-9 (nhr-9).